The chain runs to 873 residues: Putative receptor-like protein kinase At5g39000 (873 aa).

A signal peptide spans 1-21; sequence MIRHALLIFSILVSTPIVGEG. Over 22 to 445 the chain is Extracellular; that stretch reads ATSTYEPTDV…KNKSHILPIT (424 aa). Residues N49, N64, N138, N168, N216, N266, N300, N340, and N437 are each glycosylated (N-linked (GlcNAc...) asparagine). The chain crosses the membrane as a helical span at residues 446 to 466; that stretch reads LAVVGSLVVLAMFVVGVLVIM. Residues 467-873 are Cytoplasmic-facing; sequence KKKKKSKPST…FSEINEPKAR (407 aa). Residues 472–494 form a disordered region; it reads SKPSTNSSWCPLPHGTDSTNTKP. The 286-residue stretch at 518–803 folds into the Protein kinase domain; it reads FEDKLIIGVG…EFALQLHETA (286 aa). ATP contacts are provided by residues 524–532 and K547; that span reads IGVGGFGSV. D646 serves as the catalytic Proton acceptor. A disordered region spans residues 813–843; sequence LDLMPSGEVGTTTDGEDDLFSRTTGHVGKST. Over residues 833–843 the composition is skewed to polar residues; it reads SRTTGHVGKST.

This sequence belongs to the protein kinase superfamily. Ser/Thr protein kinase family.

The protein resides in the membrane. The sequence is that of Putative receptor-like protein kinase At5g39000 from Arabidopsis thaliana (Mouse-ear cress).